Here is a 277-residue protein sequence, read N- to C-terminus: Phosphatidylglycerol--prolipoprotein diacylglyceryl transferase (277 aa).

A run of 4 helical transmembrane segments spans residues 18-38 (ISVKWYGVIIASAVVIALLLA), 51-71 (IIVDLLIWAIPISIISARIYY), 89-109 (IWHGGIAIYGALIGAVLTAVI), and 116-136 (ISFWKLADVVAPSLIIAQAIG). An a 1,2-diacyl-sn-glycero-3-phospho-(1'-sn-glycerol)-binding site is contributed by arginine 137. Transmembrane regions (helical) follow at residues 177-197 (QPTFLYESLWNVLGFIVLLII), 205-225 (GELFLSYVIWYSFGRFFIEGM), and 235-255 (FRVSQVLSLLLIVLSIGLIIY).

This sequence belongs to the Lgt family.

Its subcellular location is the cell membrane. The enzyme catalyses L-cysteinyl-[prolipoprotein] + a 1,2-diacyl-sn-glycero-3-phospho-(1'-sn-glycerol) = an S-1,2-diacyl-sn-glyceryl-L-cysteinyl-[prolipoprotein] + sn-glycerol 1-phosphate + H(+). It functions in the pathway protein modification; lipoprotein biosynthesis (diacylglyceryl transfer). In terms of biological role, catalyzes the transfer of the diacylglyceryl group from phosphatidylglycerol to the sulfhydryl group of the N-terminal cysteine of a prolipoprotein, the first step in the formation of mature lipoproteins. The polypeptide is Phosphatidylglycerol--prolipoprotein diacylglyceryl transferase (Listeria innocua serovar 6a (strain ATCC BAA-680 / CLIP 11262)).